A 793-amino-acid chain; its full sequence is Phosphoribosylformylglycinamidine synthase subunit PurL (793 aa).

Residue histidine 53 is part of the active site. The ATP site is built by tyrosine 56 and lysine 95. Residue glutamate 97 participates in Mg(2+) binding. Substrate is bound by residues 98-101 (SHNH) and arginine 120. The active-site Proton acceptor is histidine 99. Position 121 (aspartate 121) interacts with Mg(2+). Position 244 (glutamine 244) interacts with substrate. Aspartate 272 lines the Mg(2+) pocket. 316 to 318 (ESQ) serves as a coordination point for substrate. Positions 523 and 560 each coordinate ATP. Residue asparagine 561 participates in Mg(2+) binding. Serine 563 is a substrate binding site.

The protein belongs to the FGAMS family. Monomer. Part of the FGAM synthase complex composed of 1 PurL, 1 PurQ and 2 PurS subunits.

Its subcellular location is the cytoplasm. It carries out the reaction N(2)-formyl-N(1)-(5-phospho-beta-D-ribosyl)glycinamide + L-glutamine + ATP + H2O = 2-formamido-N(1)-(5-O-phospho-beta-D-ribosyl)acetamidine + L-glutamate + ADP + phosphate + H(+). It participates in purine metabolism; IMP biosynthesis via de novo pathway; 5-amino-1-(5-phospho-D-ribosyl)imidazole from N(2)-formyl-N(1)-(5-phospho-D-ribosyl)glycinamide: step 1/2. Functionally, part of the phosphoribosylformylglycinamidine synthase complex involved in the purines biosynthetic pathway. Catalyzes the ATP-dependent conversion of formylglycinamide ribonucleotide (FGAR) and glutamine to yield formylglycinamidine ribonucleotide (FGAM) and glutamate. The FGAM synthase complex is composed of three subunits. PurQ produces an ammonia molecule by converting glutamine to glutamate. PurL transfers the ammonia molecule to FGAR to form FGAM in an ATP-dependent manner. PurS interacts with PurQ and PurL and is thought to assist in the transfer of the ammonia molecule from PurQ to PurL. The chain is Phosphoribosylformylglycinamidine synthase subunit PurL from Prochlorococcus marinus (strain SARG / CCMP1375 / SS120).